A 303-amino-acid chain; its full sequence is 2-dehydropantoate 2-reductase (303 aa).

NADP(+) contacts are provided by residues 7–12, Arg35, Asn103, Ala129, and Arg131; that span reads GAGSLG. Substrate is bound at residue Asn103. Lys182 (proton donor) is an active-site residue. Positions 186, 190, 200, and 250 each coordinate substrate. Glu262 lines the NADP(+) pocket.

This sequence belongs to the ketopantoate reductase family.

The protein resides in the cytoplasm. It catalyses the reaction (R)-pantoate + NADP(+) = 2-dehydropantoate + NADPH + H(+). Its pathway is cofactor biosynthesis; (R)-pantothenate biosynthesis; (R)-pantoate from 3-methyl-2-oxobutanoate: step 2/2. Functionally, catalyzes the NADPH-dependent reduction of ketopantoate into pantoic acid. The protein is 2-dehydropantoate 2-reductase (panE) of Pseudomonas aeruginosa (strain ATCC 15692 / DSM 22644 / CIP 104116 / JCM 14847 / LMG 12228 / 1C / PRS 101 / PAO1).